The sequence spans 409 residues: Peptide chain release factor subunit 1 (409 aa).

The protein belongs to the eukaryotic release factor 1 family. As to quaternary structure, heterodimer of two subunits, one of which binds GTP.

The protein resides in the cytoplasm. Its function is as follows. Directs the termination of nascent peptide synthesis (translation) in response to the termination codons UAA, UAG and UGA. The protein is Peptide chain release factor subunit 1 of Methanopyrus kandleri (strain AV19 / DSM 6324 / JCM 9639 / NBRC 100938).